The following is a 243-amino-acid chain: Urease accessory protein UreF (243 aa).

The protein belongs to the UreF family. As to quaternary structure, ureD, UreF and UreG form a complex that acts as a GTP-hydrolysis-dependent molecular chaperone, activating the urease apoprotein by helping to assemble the nickel containing metallocenter of UreC. The UreE protein probably delivers the nickel.

It localises to the cytoplasm. Functionally, required for maturation of urease via the functional incorporation of the urease nickel metallocenter. This is Urease accessory protein UreF from Rhodopseudomonas palustris (strain BisB5).